We begin with the raw amino-acid sequence, 116 residues long: UPF0102 protein LBJ_1427 (116 aa).

It belongs to the UPF0102 family.

In Leptospira borgpetersenii serovar Hardjo-bovis (strain JB197), this protein is UPF0102 protein LBJ_1427.